The sequence spans 532 residues: Flavin-containing monooxygenase 3 (532 aa).

Residues G9–S13, E32, L40–W41, and N61–S62 each bind FAD. Residues T60 to N61 and S195 to D198 each bind NADP(+). S401 is modified (phosphoserine). The helical transmembrane segment at F510–G530 threads the bilayer.

This sequence belongs to the FMO family. The cofactor is FAD. As to expression, liver.

It localises to the microsome membrane. Its subcellular location is the endoplasmic reticulum membrane. The enzyme catalyses trimethylamine + NADPH + O2 = trimethylamine N-oxide + NADP(+) + H2O. It carries out the reaction N,N-dimethylaniline + NADPH + O2 + H(+) = N,N-dimethylaniline N-oxide + NADP(+) + H2O. The catalysed reaction is hypotaurine + NADPH + O2 + H(+) = taurine + NADP(+) + H2O. It catalyses the reaction (S)-nicotine + NADPH + O2 = trans-(S)-nicotine N(1')-oxide + NADP(+) + H2O. The enzyme catalyses albendazole + NADPH + O2 + H(+) = albendazole S-oxide + NADP(+) + H2O. Its function is as follows. Essential hepatic enzyme that catalyzes the oxygenation of a wide variety of nitrogen- and sulfur-containing compounds including drugs as well as dietary compounds. Plays an important role in the metabolism of trimethylamine (TMA), via the production of trimethylamine N-oxide (TMAO) metabolite. TMA is generated by the action of gut microbiota using dietary precursors such as choline, choline containing compounds, betaine or L-carnitine. By regulating TMAO concentration, FMO3 directly impacts both platelet responsiveness and rate of thrombus formation. The chain is Flavin-containing monooxygenase 3 (FMO3) from Macaca mulatta (Rhesus macaque).